The following is a 103-amino-acid chain: MAAVSLTVSTVKPLGDRIFIKVSASEEKTAGGILLPDSAKEKPQVGEVAQVGPGKLNDDGSRQTPEVSIGDKVLYSKYAGTDIKLGGDEYVLLSEKDILAVVG.

This sequence belongs to the GroES chaperonin family. In terms of assembly, heptamer of 7 subunits arranged in a ring. Interacts with the chaperonin GroEL.

Its subcellular location is the cytoplasm. Functionally, together with the chaperonin GroEL, plays an essential role in assisting protein folding. The GroEL-GroES system forms a nano-cage that allows encapsulation of the non-native substrate proteins and provides a physical environment optimized to promote and accelerate protein folding. GroES binds to the apical surface of the GroEL ring, thereby capping the opening of the GroEL channel. The protein is Co-chaperonin GroES of Prochlorococcus marinus (strain MIT 9312).